We begin with the raw amino-acid sequence, 286 residues long: 4-hydroxy-tetrahydrodipicolinate synthase (286 aa).

Thr42 is a pyruvate binding site. Residue Tyr129 is the Proton donor/acceptor of the active site. Lys157 (schiff-base intermediate with substrate) is an active-site residue. Ile196 lines the pyruvate pocket.

Belongs to the DapA family. As to quaternary structure, homotetramer; dimer of dimers.

The protein localises to the cytoplasm. It catalyses the reaction L-aspartate 4-semialdehyde + pyruvate = (2S,4S)-4-hydroxy-2,3,4,5-tetrahydrodipicolinate + H2O + H(+). It participates in amino-acid biosynthesis; L-lysine biosynthesis via DAP pathway; (S)-tetrahydrodipicolinate from L-aspartate: step 3/4. In terms of biological role, catalyzes the condensation of (S)-aspartate-beta-semialdehyde [(S)-ASA] and pyruvate to 4-hydroxy-tetrahydrodipicolinate (HTPA). The protein is 4-hydroxy-tetrahydrodipicolinate synthase of Chlamydia trachomatis serovar A (strain ATCC VR-571B / DSM 19440 / HAR-13).